The sequence spans 1733 residues: Serine-aspartate repeat-containing protein F (1733 aa).

A signal peptide spans 1-45 (MKKRRQGPINKRVDFLSNKVNKYSIRKFTVGTASILVGATLMFGA). The interval 46–678 (ADNEAKAAED…GSSTAQGDNP (633 aa)) is ligand binding A region. Disordered stretches follow at residues 51–269 (KAAE…SVND) and 332–351 (PLALNRSQSKNSPHKSASPR). Residues 61–74 (ASKEEQKGSRDNEN) are compositionally biased toward basic and acidic residues. Composition is skewed to polar residues over residues 85–99 (GSHSSEKTTNVNNAT) and 146–168 (PKTSTTQQDSTEKNNPSLKDNLN). Residues 175–184 (KESKTDEHST) are compositionally biased toward basic and acidic residues. Over residues 186–226 (QAQMSTNKSNLDTNDSPTQSEKTSSQANNDSTDNQSAPSKQ) the composition is skewed to polar residues. Residues 227 to 253 (LDSKPSEQKVYKTKFNDEPTQDVEHTT) show a composition bias toward basic and acidic residues. 2 stretches are compositionally biased toward polar residues: residues 255 to 266 (KLKTPSVSTDSS) and 336 to 346 (NRSQSKNSPHK). 4 CNA-B domains span residues 679–797 (TYSL…YLTP), 798–907 (KYNV…FYKP), 908–1018 (TYNL…YKTP), and 1019–1129 (KYSV…FDDD). Residues 679–1129 (TYSLGDYVWL…SIDNGYFDDD (451 aa)) are type I collagen binding region. Residues 862–890 (FETPEGYTPTKQNSGSDEGKDSNGTKTTV) are disordered. The segment at 1085–1708 (KPEGMTQTTA…ANEDHDSKGT (624 aa)) is disordered. The segment covering 1107–1119 (EDVRVTITDHDDF) has biased composition (basic and acidic residues). Acidic residues predominate over residues 1125 to 1684 (YFDDDSDSDS…DSDSDSDSDS (560 aa)). Over residues 1685–1706 (DSDKNAKDKLPDTGANEDHDSK) the composition is skewed to basic and acidic residues. The short motif at 1694 to 1698 (LPDTG) is the LPXTG sorting signal element. At threonine 1697 the chain carries Pentaglycyl murein peptidoglycan amidated threonine. The propeptide at 1698–1733 (GANEDHDSKGTLLGTLFAGLGALLLGRRRKKDNKEK) is removed by sortase.

It belongs to the serine-aspartate repeat-containing protein (SDr) family.

The protein resides in the secreted. It is found in the cell wall. Functionally, binds to type I collagen via alpha-2(I) or alpha-1(I) chains, although its affinity for the alpha-1(I) chain is significantly higher. Involved in bacterial adherence to transcutaneous drivelines from explanted ventricular assist devices. The protein is Serine-aspartate repeat-containing protein F (sdrF) of Staphylococcus epidermidis.